Here is a 340-residue protein sequence, read N- to C-terminus: 4-hydroxy-2-oxovalerate aldolase (340 aa).

The region spanning valine 8 to methionine 260 is the Pyruvate carboxyltransferase domain. Arginine 16–aspartate 17 lines the substrate pocket. Position 17 (aspartate 17) interacts with Mn(2+). Residue histidine 20 is the Proton acceptor of the active site. Residues serine 170 and histidine 199 each contribute to the substrate site. 2 residues coordinate Mn(2+): histidine 199 and histidine 201. Residue tyrosine 290 participates in substrate binding.

It belongs to the 4-hydroxy-2-oxovalerate aldolase family.

The enzyme catalyses (S)-4-hydroxy-2-oxopentanoate = acetaldehyde + pyruvate. The chain is 4-hydroxy-2-oxovalerate aldolase from Shewanella pealeana (strain ATCC 700345 / ANG-SQ1).